We begin with the raw amino-acid sequence, 764 residues long: Irregular chiasm C-roughest protein (764 aa).

An N-terminal signal peptide occupies residues M1 to S19. Residues S20–M533 are Extracellular-facing. Ig-like C2-type domains follow at residues P21–R120, P132–R230, P237–S343, P346–S419, and P430–S530. 5 cysteine pairs are disulfide-bonded: C49–C107, C155–C214, C281–C325, C367–C408, and C450–C508. N-linked (GlcNAc...) asparagine glycosylation is found at N211, N313, N393, N400, and N507. A helical transmembrane segment spans residues T534–I556. Residues K557 to V764 are Cytoplasmic-facing. Disordered stretches follow at residues H640–Q660 and N691–A719. Polar residues predominate over residues G692–A701. A compositionally biased stretch (low complexity) spans S702–A719.

Postembryonic expression is strong in the developing optic lobe and in the eye imaginal disk.

The protein resides in the membrane. Its function is as follows. Required for correct axonal pathway formation in the optic lobe and for programmed cell death in the developing retina. The protein is Irregular chiasm C-roughest protein (rst) of Drosophila melanogaster (Fruit fly).